Consider the following 456-residue polypeptide: ATP synthase subunit beta 1 (456 aa).

Residue 152-159 coordinates ATP; sequence GGAGVGKS.

The protein belongs to the ATPase alpha/beta chains family. F-type ATPases have 2 components, CF(1) - the catalytic core - and CF(0) - the membrane proton channel. CF(1) has five subunits: alpha(3), beta(3), gamma(1), delta(1), epsilon(1). CF(0) has three main subunits: a(1), b(2) and c(9-12). The alpha and beta chains form an alternating ring which encloses part of the gamma chain. CF(1) is attached to CF(0) by a central stalk formed by the gamma and epsilon chains, while a peripheral stalk is formed by the delta and b chains.

The protein resides in the cell membrane. It catalyses the reaction ATP + H2O + 4 H(+)(in) = ADP + phosphate + 5 H(+)(out). In terms of biological role, produces ATP from ADP in the presence of a proton gradient across the membrane. The catalytic sites are hosted primarily by the beta subunits. In Listeria innocua serovar 6a (strain ATCC BAA-680 / CLIP 11262), this protein is ATP synthase subunit beta 1.